Consider the following 460-residue polypeptide: Cysteine--tRNA ligase (460 aa).

Cys-28 provides a ligand contact to Zn(2+). The short motif at 30–40 (MTVYDYCHLGH) is the 'HIGH' region element. Residues Cys-209, His-234, and Glu-238 each contribute to the Zn(2+) site. A 'KMSKS' region motif is present at residues 266–270 (KMSKS). Lys-269 is an ATP binding site.

This sequence belongs to the class-I aminoacyl-tRNA synthetase family. Monomer. The cofactor is Zn(2+).

It localises to the cytoplasm. The catalysed reaction is tRNA(Cys) + L-cysteine + ATP = L-cysteinyl-tRNA(Cys) + AMP + diphosphate. This Pseudomonas savastanoi pv. phaseolicola (strain 1448A / Race 6) (Pseudomonas syringae pv. phaseolicola (strain 1448A / Race 6)) protein is Cysteine--tRNA ligase.